The chain runs to 542 residues: MSSFSYEPYFSTSYKRRYVETPRVHISSVRSGYSTARSAYSSYSAPVSSSLSVRRSYSSSSGSLMPSLENLDLSQVAAISNDLKSIRTQEKAQLQDLNDRFASFIERVHELEQQNKVLEAELLVLRQKHSEPSRFRALYEQEIRDLRLAAEDATNEKQALQGEREGLEETLRNLQARYEEEVLSREDAEGRLMEARKGADEAALARAELEKRIDSLMDEIAFLKKVHEEEIAELQAQIQYAQISVEMDVSSKPDLSAALKDIRAQYEKLAAKNMQNAEEWFKSRFTVLTESAAKNTDAVRAAKDEVSESRRLLKAKTLEIEACRGMNEALEKQLQELEDKQNADISAMQDTINKLENELRSTKSEMARYLKEYQDLLNVKMALDIEIAAYRKLLEGEETRLSFTSVGSITSGYSQSSQVFGRSAYSGLQSSSYLMSARAFPAYYTSHVQEEQSEVEETIEATKAEEAKDEPPSEGEAEEEEKEKEEGEEEEGAEEEEAAKDESEDAKEEEGGEGEEEDTKESEEEEKKEESAGEEQAAKKKD.

Position 2 is an N-acetylserine (Ser2). Residues 2-93 form a head region; sequence SSFSYEPYFS…KSIRTQEKAQ (92 aa). An O-linked (GlcNAc) threonine glycan is attached at Thr21. At Arg23 the chain carries Asymmetric dimethylarginine; alternate. Arg23 is modified (omega-N-methylarginine; alternate). Ser27 carries O-linked (GlcNAc) serine glycosylation. At Arg30 the chain carries Omega-N-methylarginine. Tyr43 bears the Phosphotyrosine mark. Phosphoserine is present on residues Ser56, Ser67, and Ser103. In terms of domain architecture, IF rod spans 90-401; sequence EKAQLQDLND…KLLEGEETRL (312 aa). Positions 94 to 125 are coil 1A; sequence LQDLNDRFASFIERVHELEQQNKVLEAELLVL. The tract at residues 126-138 is linker 1; the sequence is RQKHSEPSRFRAL. Residues 139-234 form a coil 1B region; sequence YEQEIRDLRL…KVHEEEIAEL (96 aa). The linker 12 stretch occupies residues 235 to 253; sequence QAQIQYAQISVEMDVSSKP. Residues 254–272 are coil 2A; that stretch reads DLSAALKDIRAQYEKLAAK. Residues 273–281 are linker 2; it reads NMQNAEEWF. The segment at 282 to 397 is coil 2B; the sequence is KSRFTVLTES…AAYRKLLEGE (116 aa). Residues 382–392 form an epitope; recognized by IF-specific monoclonal antibody region; sequence ALDIEIAAYRK. Residues 398–444 form a tail, subdomain A region; sequence ETRLSFTSVGSITSGYSQSSQVFGRSAYSGLQSSSYLMSARAFPAYY. Residues 398–542 are tail; that stretch reads ETRLSFTSVG…GEEQAAKKKD (145 aa). A tail, subdomain B (acidic) region spans residues 445–542; the sequence is TSHVQEEQSE…GEEQAAKKKD (98 aa). The disordered stretch occupies residues 451 to 542; it reads EQSEVEETIE…GEEQAAKKKD (92 aa). Ser453 is subject to Phosphoserine. Over residues 460 to 471 the composition is skewed to basic and acidic residues; the sequence is EATKAEEAKDEP. The span at 472–527 shows a compositional bias: acidic residues; sequence PSEGEAEEEEKEKEEGEEEEGAEEEEAAKDESEDAKEEEGGEGEEEDTKESEEEEK. Residues Ser473 and Ser503 each carry the phosphoserine modification. Phosphothreonine is present on Thr519. 2 positions are modified to phosphoserine: Ser522 and Ser531. The span at 528–542 shows a compositional bias: basic and acidic residues; the sequence is KEESAGEEQAAKKKD.

The protein belongs to the intermediate filament family. As to quaternary structure, forms homodimers (in vitro). Forms heterodimers with NEFH or NEFM; which can further hetero-oligomerize (in vitro). Forms heterodimers with INA (in vitro). Interacts with ARHGEF28. Interacts with TRIM2. In terms of processing, O-glycosylated; contains three N-acetylglucosamine side chains. Post-translationally, phosphorylated in the head and rod regions by the PKC kinase PKN1, leading to the inhibition of polymerization. Ubiquitinated in the presence of TRIM2 and UBE2D1. In terms of tissue distribution, expressed in the dorsal root ganglion neurons (at protein level).

It is found in the cell projection. It localises to the axon. The protein resides in the cytoplasm. The protein localises to the cytoskeleton. In terms of biological role, neurofilaments usually contain three intermediate filament proteins: NEFL, NEFM, and NEFH which are involved in the maintenance of neuronal caliber. May additionally cooperate with the neuronal intermediate filament proteins PRPH and INA to form neuronal filamentous networks. The polypeptide is Neurofilament light polypeptide (Nefl) (Rattus norvegicus (Rat)).